A 521-amino-acid polypeptide reads, in one-letter code: Glucose-1-phosphate adenylyltransferase small subunit, chloroplastic (521 aa).

The segment at 1–24 (MAASIGALKSSPSSHNCINERRND) is disordered. The N-terminal 72 residues, 1–72 (MAASIGALKS…RSPLIVSPKA (72 aa)), are a transit peptide targeting the chloroplast.

Belongs to the bacterial/plant glucose-1-phosphate adenylyltransferase family. Heterotetramer.

It localises to the plastid. It is found in the chloroplast. It catalyses the reaction alpha-D-glucose 1-phosphate + ATP + H(+) = ADP-alpha-D-glucose + diphosphate. It functions in the pathway glycan biosynthesis; starch biosynthesis. Activated by 3'phosphoglycerate, inhibited by orthophosphate. Allosteric regulation. Functionally, this protein plays a role in synthesis of starch. It catalyzes the synthesis of the activated glycosyl donor, ADP-glucose from Glc-1-P and ATP. This chain is Glucose-1-phosphate adenylyltransferase small subunit, chloroplastic, found in Solanum lycopersicum (Tomato).